An 80-amino-acid polypeptide reads, in one-letter code: Defensin-like protein 17 (80 aa).

A signal peptide spans 1 to 29; sequence MAKSATIITFLFAALVLFAAFEAPTMVEA. Residue Gln30 is modified to Pyrrolidone carboxylic acid. 4 cysteine pairs are disulfide-bonded: Cys33–Cys80, Cys44–Cys65, Cys50–Cys74, and Cys54–Cys76.

Belongs to the DEFL family.

It is found in the secreted. In terms of biological role, confers broad-spectrum resistance to pathogens. The protein is Defensin-like protein 17 (PDF1.2C) of Arabidopsis thaliana (Mouse-ear cress).